A 1082-amino-acid chain; its full sequence is RhoGEF domain-containing protein gxcI (1082 aa).

The segment covering 1–15 has biased composition (polar residues); it reads MRKNSTSNPSPSHQF. Disordered stretches follow at residues 1–29, 59–78, 91–394, 438–488, and 504–524; these read MRKN…VNNN, DKNQ…VLPQ, YNEQ…VTSL, KQAS…SVSN, and INSF…SLSL. Composition is skewed to low complexity over residues 20-29, 62-71, 96-109, 116-160, and 170-184; these read KNTTTVVNNN, QQQQQQQQQQ, PSSS…SSSP, LLST…SGSP, and PTIL…RQLP. The span at 185–206 shows a compositional bias: pro residues; sequence TRPPSPLPKLPSRPTSPVPPNP. Positions 211–244 are enriched in low complexity; that stretch reads NTTTTNNNNNNNNNNNNNNNNNNNNNNNNNNNNN. Positions 262 to 276 are enriched in pro residues; the sequence is PIPPPNDKPAPPPRP. The segment covering 282–366 has biased composition (low complexity); it reads TLTTPPTIAT…NNNNNSNNNK (85 aa). Positions 367–379 are enriched in pro residues; that stretch reads PLPPTSTKPPRPK. Residues 450–473 are compositionally biased toward low complexity; it reads SSLSLSTTPTSVSPSTPSSANPTP. One can recognise a DH domain in the interval 622-817; that stretch reads SFNKVIKEII…EKIVNDINGK (196 aa). The tract at residues 838–994 is PH-like; it reads QQLRDQTFLK…NDIDEAINIL (157 aa). Disordered regions lie at residues 920–961 and 1017–1060; these read NNNN…NSTP and NNNN…NSNN.

GTPase-activating protein. This is RhoGEF domain-containing protein gxcI (gxcI) from Dictyostelium discoideum (Social amoeba).